The primary structure comprises 339 residues: MQALVNKIWYQGHPLRWLLLPLSWLFAVITYVRRALFRLGIKSQTAMPVPVIVVGNITVGGSGKTPTVIYLIELLRQHGFTPGVISRGYGVDIQGVKTVNLGASAAEVGDEPAMIVARTQVPMVVGAKRVDAANALIAEFGVDVIICDDGLQHYALGRDIELVVIDGQRGLGNGLLLPAGPLREGAWRLDAVDFIVNNGGPAAKGQFEMQLAPTEVKPVKCDVTSGEYSFDKSQPLVAMAGIGNPARFFESLRAQGYQLALCQGFDDHQAYDKTLLRDLAQDLPLLMTEKDAVKCRDFAQENWWYLAVNAKLSPQFDEQLLARLREVAAAKQGNFHGIR.

58–65 (TVGGSGKT) lines the ATP pocket.

Belongs to the LpxK family.

It catalyses the reaction a lipid A disaccharide + ATP = a lipid IVA + ADP + H(+). The protein operates within glycolipid biosynthesis; lipid IV(A) biosynthesis; lipid IV(A) from (3R)-3-hydroxytetradecanoyl-[acyl-carrier-protein] and UDP-N-acetyl-alpha-D-glucosamine: step 6/6. Functionally, transfers the gamma-phosphate of ATP to the 4'-position of a tetraacyldisaccharide 1-phosphate intermediate (termed DS-1-P) to form tetraacyldisaccharide 1,4'-bis-phosphate (lipid IVA). The sequence is that of Tetraacyldisaccharide 4'-kinase from Shewanella baltica (strain OS155 / ATCC BAA-1091).